A 277-amino-acid chain; its full sequence is Phosphatidylglycerol--prolipoprotein diacylglyceryl transferase (277 aa).

A run of 7 helical transmembrane segments spans residues 21-41 (LAVRWYGLMYLFGFMFALWLA), 60-80 (LLFAGFLGVVIGGRVGYVLFY), 95-115 (VWTGGMSFHGGLLGVISAMLW), 124-144 (FFTIADFVAPLVPFGLGAGRL), 176-196 (SQLYEFALEGVVLFLILNWFI), 203-223 (GTVSGLFLFGYGTFRFLVEYV), and 239-259 (MGQILSLPMVIGGLLMMLWAF). A 1,2-diacyl-sn-glycero-3-phospho-(1'-sn-glycerol) is bound at residue R143.

Belongs to the Lgt family.

It localises to the cell inner membrane. It carries out the reaction L-cysteinyl-[prolipoprotein] + a 1,2-diacyl-sn-glycero-3-phospho-(1'-sn-glycerol) = an S-1,2-diacyl-sn-glyceryl-L-cysteinyl-[prolipoprotein] + sn-glycerol 1-phosphate + H(+). The protein operates within protein modification; lipoprotein biosynthesis (diacylglyceryl transfer). In terms of biological role, catalyzes the transfer of the diacylglyceryl group from phosphatidylglycerol to the sulfhydryl group of the N-terminal cysteine of a prolipoprotein, the first step in the formation of mature lipoproteins. This chain is Phosphatidylglycerol--prolipoprotein diacylglyceryl transferase, found in Aliivibrio fischeri (strain ATCC 700601 / ES114) (Vibrio fischeri).